Here is an 887-residue protein sequence, read N- to C-terminus: 3-hydroxy-3-methylglutaryl-coenzyme A reductase (887 aa).

Residues 1 to 9 are Cytoplasmic-facing; that stretch reads MLSRLFRMH. A helical transmembrane segment spans residues 10–39; the sequence is GLFVASHPWEVIVGTVTLTICMMSMNMFTG. At 40-56 the chain is on the lumenal side; it reads NNKICGWNYECPKFEED. The helical transmembrane segment at 57 to 78 threads the bilayer; sequence VLSSDIIILTITRCIAILYIYF. The 158-residue stretch at 61–218 folds into the SSD domain; that stretch reads DIIILTITRC…MTFFPACVSL (158 aa). An INSIG-binding motif motif is present at residues 75 to 78; it reads YIYF. Residues 79–89 are Cytoplasmic-facing; the sequence is QFQNLRQLGSK. Lys89 is covalently cross-linked (Glycyl lysine isopeptide (Lys-Gly) (interchain with G-Cter in ubiquitin)). Residues 90–114 form a helical membrane-spanning segment; the sequence is YILGIAGLFTIFSSFVFSTVVIHFL. The Lumenal portion of the chain corresponds to 115–123; the sequence is DKELTGLNE. A helical membrane pass occupies residues 124 to 149; that stretch reads ALPFFLLLIDLSRASALAKFALSSNS. The Cytoplasmic segment spans residues 150–159; that stretch reads QDEVRENIAR. The helical transmembrane segment at 160–187 threads the bilayer; sequence GMAILGPTFTLDALVECLVIGVGTMSGV. Residues 188–191 are Lumenal-facing; that stretch reads RQLE. A helical membrane pass occupies residues 192–220; the sequence is IMCCFGCMSVLANYFVFMTFFPACVSLVL. At 221-248 the chain is on the cytoplasmic side; that stretch reads ELSRESREGRPIWQLSHFARVLEEEENK. Lys248 participates in a covalent cross-link: Glycyl lysine isopeptide (Lys-Gly) (interchain with G-Cter in ubiquitin). Residues 249–275 traverse the membrane as a helical segment; that stretch reads PNPVTQRVKMIMSLGLVLVHAHSRWIA. The Lumenal segment spans residues 276 to 314; the sequence is DPSPQNSTTEHSKVSLGLDEDVSKRIEPSVSLWQFYLSK. A glycan (N-linked (GlcNAc...) asparagine) is linked at Asn281. A helical transmembrane segment spans residues 315-339; the sequence is MISMDIEQVVTLSLAFLLAVKYIFF. The Cytoplasmic portion of the chain corresponds to 340-887; that stretch reads EQAETESTLS…LQGTCTKKAA (548 aa). Catalysis depends on charge relay system residues Glu558, Lys690, and Asp766. His865 acts as the Proton donor in catalysis. Position 871 is a phosphoserine; by AMPK (Ser871).

Belongs to the HMG-CoA reductase family. As to quaternary structure, homotetramer. Homodimer. Interacts (via its SSD) with INSIG1; the interaction, accelerated by sterols, leads to the recruitment of HMGCR to AMFR/gp78 for its ubiquitination by the sterol-mediated ERAD pathway. Interacts with UBIAD1. Post-translationally, undergoes sterol-mediated ubiquitination and ER-associated degradation (ERAD). Accumulation of sterols in the endoplasmic reticulum (ER) membrane, triggers binding of the reductase to the ER membrane protein INSIG1 or INSIG2. The INSIG1 binding leads to the recruitment of the ubiquitin ligase, AMFR/gp78, RNF139 or RNF145, initiating ubiquitination of the reductase. The ubiquitinated reductase is then extracted from the ER membrane and delivered to cytosolic 26S proteosomes by a mechanism probably mediated by the ATPase Valosin-containing protein VCP/p97. The INSIG2-binding leads to the recruitment of the ubiquitin ligase RNF139, initiating ubiquitination of the reductase. Lys-248 is the main site of ubiquitination. Ubiquitination is enhanced by the presence of a geranylgeranylated protein. In terms of processing, N-glycosylated. Deglycosylated by NGLY1 on release from the endoplasmic reticulum (ER) in a sterol-mediated manner. Phosphorylated. Phosphorylation at Ser-871 reduces the catalytic activity.

It is found in the endoplasmic reticulum membrane. The protein resides in the peroxisome membrane. It catalyses the reaction (R)-mevalonate + 2 NADP(+) + CoA = (3S)-3-hydroxy-3-methylglutaryl-CoA + 2 NADPH + 2 H(+). The protein operates within metabolic intermediate biosynthesis; (R)-mevalonate biosynthesis; (R)-mevalonate from acetyl-CoA: step 3/3. Its activity is regulated as follows. Regulated by a negative feedback mechanism through sterols and non-sterol metabolites derived from mevalonate. Phosphorylation at Ser-871 down-regulates the catalytic activity. Functionally, catalyzes the conversion of (3S)-hydroxy-3-methylglutaryl-CoA (HMG-CoA) to mevalonic acid, the rate-limiting step in the synthesis of cholesterol and other isoprenoids, thus plays a critical role in cellular cholesterol homeostasis. In Mesocricetus auratus (Golden hamster), this protein is 3-hydroxy-3-methylglutaryl-coenzyme A reductase (HMGCR).